The sequence spans 55 residues: Rubredoxin-1 (55 aa).

One can recognise a Rubredoxin-like domain in the interval 1–54; sequence MKKWQCVVCGLIYDEAKGWPEEGIEAGTRWEDVPEDWLCPDCGVGKLDFEMIEI. Residues C6, C9, C39, and C42 each coordinate Fe cation.

This sequence belongs to the rubredoxin family. It depends on Fe(3+) as a cofactor.

Its subcellular location is the cytoplasm. Its pathway is hydrocarbon metabolism; alkane degradation. In terms of biological role, involved in the hydrocarbon hydroxylating system, which transfers electrons from NADH to rubredoxin reductase and then through rubredoxin to alkane 1 monooxygenase. This Pseudomonas aeruginosa (strain ATCC 15692 / DSM 22644 / CIP 104116 / JCM 14847 / LMG 12228 / 1C / PRS 101 / PAO1) protein is Rubredoxin-1 (rubA1).